Here is a 239-residue protein sequence, read N- to C-terminus: tRNA (guanine-N(7)-)-methyltransferase (239 aa).

Residues glutamate 69, glutamate 94, aspartate 121, and aspartate 144 each contribute to the S-adenosyl-L-methionine site. The active site involves aspartate 144. Substrate is bound by residues lysine 148, aspartate 180, and threonine 217–glutamate 220.

This sequence belongs to the class I-like SAM-binding methyltransferase superfamily. TrmB family. In terms of assembly, monomer.

It carries out the reaction guanosine(46) in tRNA + S-adenosyl-L-methionine = N(7)-methylguanosine(46) in tRNA + S-adenosyl-L-homocysteine. The protein operates within tRNA modification; N(7)-methylguanine-tRNA biosynthesis. Catalyzes the formation of N(7)-methylguanine at position 46 (m7G46) in tRNA. In Buchnera aphidicola subsp. Acyrthosiphon pisum (strain Tuc7), this protein is tRNA (guanine-N(7)-)-methyltransferase.